A 932-amino-acid polypeptide reads, in one-letter code: Protocadherin gamma-A6 (932 aa).

Residues 1-29 (MAPPQRHPQRSEQVLLLTLLGTLWGAAAA) form the signal peptide. Cadherin domains lie at 30 to 133 (QIRY…TPRF), 134 to 242 (LKEE…TPVF), 243 to 347 (TQPV…VPEV), 348 to 452 (VVTS…PPTF), 453 to 562 (PHSS…APEI), and 570 to 682 (DGST…EPSA). Residues 30–692 (QIRYSIPEEL…KPNDSDLTLY (663 aa)) are Extracellular-facing. Residue N81 is glycosylated (N-linked (GlcNAc...) asparagine). N419 and N545 each carry an N-linked (GlcNAc...) asparagine glycan. An N-linked (GlcNAc...) asparagine glycan is attached at N685. A helical transmembrane segment spans residues 693–713 (LVVAVAAVSCVFLAFVIVLLA). Over 714-932 (LRLQRWHKSR…KKKSGKKEKK (219 aa)) the chain is Cytoplasmic. Disordered regions lie at residues 803-841 (DPRQ…WPNN) and 902-932 (ATLT…KEKK). Over residues 806–841 (QLQQAPPNTDWRFSQAQRPGTSGSQNGDDTGTWPNN) the composition is skewed to polar residues. The segment covering 922–932 (NKKKSGKKEKK) has biased composition (basic residues).

It is found in the cell membrane. Its function is as follows. Potential calcium-dependent cell-adhesion protein. May be involved in the establishment and maintenance of specific neuronal connections in the brain. The sequence is that of Protocadherin gamma-A6 (PCDHGA6) from Pan troglodytes (Chimpanzee).